Reading from the N-terminus, the 90-residue chain is MSRTVFCRKYQKELEGLAMPPMPGPKGQDIYENVSKLAWEEWQNQQTMLINEKHLNLMDVNNRKYLQAQMERFFNNEPFDQAEGYVPPEK.

Belongs to the Fe(2+)-trafficking protein family.

Functionally, could be a mediator in iron transactions between iron acquisition and iron-requiring processes, such as synthesis and/or repair of Fe-S clusters in biosynthetic enzymes. This Marinobacter nauticus (strain ATCC 700491 / DSM 11845 / VT8) (Marinobacter aquaeolei) protein is Probable Fe(2+)-trafficking protein.